Reading from the N-terminus, the 259-residue chain is Zinc import ATP-binding protein ZnuC (259 aa).

The region spanning 11 to 225 (IRLENIYVHR…PEYLAIFGGQ (215 aa)) is the ABC transporter domain. Position 43–50 (43–50 (GPNGAGKS)) interacts with ATP.

Belongs to the ABC transporter superfamily. Zinc importer (TC 3.A.1.15.5) family. The complex is composed of two ATP-binding proteins (ZnuC), two transmembrane proteins (ZnuB) and a solute-binding protein (ZnuA).

It is found in the cell inner membrane. It catalyses the reaction Zn(2+)(out) + ATP(in) + H2O(in) = Zn(2+)(in) + ADP(in) + phosphate(in) + H(+)(in). Its function is as follows. Part of the ABC transporter complex ZnuABC involved in zinc import. Responsible for energy coupling to the transport system. This Acinetobacter baylyi (strain ATCC 33305 / BD413 / ADP1) protein is Zinc import ATP-binding protein ZnuC.